The following is a 336-amino-acid chain: Casein kinase I isoform beta (336 aa).

The region spanning 17–285 is the Protein kinase domain; it reads YKLVREIGFG…YLRQLFRLLF (269 aa). Residues 23–31 and K46 each bind ATP; that span reads IGFGSFGHV. The Proton acceptor role is filled by D136. The segment covering 309-320 has biased composition (low complexity); sequence ASSSSGEGQQAQ. The disordered stretch occupies residues 309-336; it reads ASSSSGEGQQAQTPTGKSDNTKSEMKHS. The span at 327–336 shows a compositional bias: basic and acidic residues; the sequence is DNTKSEMKHS.

The protein belongs to the protein kinase superfamily. CK1 Ser/Thr protein kinase family. Casein kinase I subfamily. Monomer.

The protein localises to the cytoplasm. The enzyme catalyses L-seryl-[protein] + ATP = O-phospho-L-seryl-[protein] + ADP + H(+). It carries out the reaction L-threonyl-[protein] + ATP = O-phospho-L-threonyl-[protein] + ADP + H(+). Casein kinases are operationally defined by their preferential utilization of acidic proteins such as caseins as substrates. It can phosphorylate a large number of proteins. Participates in Wnt signaling. The protein is Casein kinase I isoform beta (CSNK1B) of Bos taurus (Bovine).